We begin with the raw amino-acid sequence, 141 residues long: Cell division protein SepF (141 aa).

The protein belongs to the SepF family. In terms of assembly, homodimer. Interacts with FtsZ.

The protein resides in the cytoplasm. Its function is as follows. Cell division protein that is part of the divisome complex and is recruited early to the Z-ring. Probably stimulates Z-ring formation, perhaps through the cross-linking of FtsZ protofilaments. Its function overlaps with FtsA. This chain is Cell division protein SepF, found in Anoxybacillus flavithermus (strain DSM 21510 / WK1).